A 469-amino-acid chain; its full sequence is Tubulin gamma-1 chain (469 aa).

142 to 148 is a binding site for GTP; it reads AGGTGSG.

This sequence belongs to the tubulin family.

It is found in the cytoplasm. The protein localises to the cytoskeleton. Its subcellular location is the microtubule organizing center. Tubulin is the major constituent of microtubules. The gamma chain is found at microtubule organizing centers (MTOC) such as the spindle poles, suggesting that it is involved in the minus-end nucleation of microtubule assembly. The protein is Tubulin gamma-1 chain (TUBG1) of Zea mays (Maize).